Reading from the N-terminus, the 323-residue chain is Acetyl-coenzyme A carboxylase carboxyl transferase subunit alpha (323 aa).

Residues 39 to 293 enclose the CoA carboxyltransferase C-terminal domain; sequence RLAGKSQQLT…KRSLAESLRQ (255 aa).

Belongs to the AccA family. In terms of assembly, acetyl-CoA carboxylase is a heterohexamer composed of biotin carboxyl carrier protein (AccB), biotin carboxylase (AccC) and two subunits each of ACCase subunit alpha (AccA) and ACCase subunit beta (AccD).

It localises to the cytoplasm. The catalysed reaction is N(6)-carboxybiotinyl-L-lysyl-[protein] + acetyl-CoA = N(6)-biotinyl-L-lysyl-[protein] + malonyl-CoA. It participates in lipid metabolism; malonyl-CoA biosynthesis; malonyl-CoA from acetyl-CoA: step 1/1. In terms of biological role, component of the acetyl coenzyme A carboxylase (ACC) complex. First, biotin carboxylase catalyzes the carboxylation of biotin on its carrier protein (BCCP) and then the CO(2) group is transferred by the carboxyltransferase to acetyl-CoA to form malonyl-CoA. The protein is Acetyl-coenzyme A carboxylase carboxyl transferase subunit alpha of Cupriavidus metallidurans (strain ATCC 43123 / DSM 2839 / NBRC 102507 / CH34) (Ralstonia metallidurans).